Here is a 476-residue protein sequence, read N- to C-terminus: Proline--tRNA ligase (476 aa).

Belongs to the class-II aminoacyl-tRNA synthetase family. ProS type 3 subfamily. In terms of assembly, homodimer.

It localises to the cytoplasm. It carries out the reaction tRNA(Pro) + L-proline + ATP = L-prolyl-tRNA(Pro) + AMP + diphosphate. Its function is as follows. Catalyzes the attachment of proline to tRNA(Pro) in a two-step reaction: proline is first activated by ATP to form Pro-AMP and then transferred to the acceptor end of tRNA(Pro). This is Proline--tRNA ligase from Cenarchaeum symbiosum (strain A).